The sequence spans 325 residues: Biotin synthase (325 aa).

The 231-residue stretch at 49–279 folds into the Radical SAM core domain; it reads VGDKVELCSI…DKNIRYAGGR (231 aa). [4Fe-4S] cluster contacts are provided by C66, C70, and C73. Residues C144, C204, and R274 each contribute to the [2Fe-2S] cluster site.

Belongs to the radical SAM superfamily. Biotin synthase family. Homodimer. The cofactor is [4Fe-4S] cluster. [2Fe-2S] cluster serves as cofactor.

The enzyme catalyses (4R,5S)-dethiobiotin + (sulfur carrier)-SH + 2 reduced [2Fe-2S]-[ferredoxin] + 2 S-adenosyl-L-methionine = (sulfur carrier)-H + biotin + 2 5'-deoxyadenosine + 2 L-methionine + 2 oxidized [2Fe-2S]-[ferredoxin]. The protein operates within cofactor biosynthesis; biotin biosynthesis; biotin from 7,8-diaminononanoate: step 2/2. Catalyzes the conversion of dethiobiotin (DTB) to biotin by the insertion of a sulfur atom into dethiobiotin via a radical-based mechanism. The sequence is that of Biotin synthase from Carboxydothermus hydrogenoformans (strain ATCC BAA-161 / DSM 6008 / Z-2901).